Reading from the N-terminus, the 375-residue chain is Sperm microtubule associated protein 2 (375 aa).

The interval 1 to 78 is disordered; that stretch reads MGELGEHRAS…MAGEELPETS (78 aa). The span at 59–75 shows a compositional bias: acidic residues; it reads EPEEEIPPEEMAGEELP. 7 THEG repeats span residues 110-129, 176-195, 214-233, 250-269, 282-301, 318-337, and 352-371; these read AKGR…PKTN, TITV…PKRF, STLE…PKVR, AAQM…PRPP, PKPY…PKAL, VTKN…PKIR, and ASLV…PKYI. Residue Ser287 is modified to Phosphoserine.

Interacts with CCT5. As to expression, testis specific (at protein level). Specifically expressed in spermatids; Sertoli cells maintain the level of expression in spermatids. If isolated spermatids are cultivated for 16 hours alone, the expression of THEG is down-regulated. May require signals from Sertoli cells to initiate changes in its gene expression through spermatogenesis.

The protein localises to the nucleus. May be involved (but not essential) in spermatogenesis. This chain is Sperm microtubule associated protein 2, found in Mus musculus (Mouse).